The sequence spans 235 residues: Sugar fermentation stimulation protein homolog (235 aa).

Belongs to the SfsA family.

The polypeptide is Sugar fermentation stimulation protein homolog (Nitrosococcus oceani (strain ATCC 19707 / BCRC 17464 / JCM 30415 / NCIMB 11848 / C-107)).